A 285-amino-acid polypeptide reads, in one-letter code: Para-Rep C6 (285 aa).

The region spanning 3 to 99 is the CRESS-DNA virus Rep endonuclease domain; the sequence is TRQSTSWVFT…VAGPWEYGLF (97 aa). Positions 10 to 13 match the RCR-1 motif; the sequence is VFTL. Residues Glu36 and His42 each coordinate a divalent metal cation. The RCR-2 motif lies at 42 to 44; the sequence is HLQ. Residues 52 to 74 carry the Nuclear localization signal motif; it reads RNTTLRQAKYIFNGLNPHLEIAR. Tyr82 acts as the For DNA cleavage activity in catalysis. The RCR-3 motif lies at 82–85; that stretch reads YAMK. Asp87 is an a divalent metal cation binding site. The short motif at 99 to 105 is the Nuclear localization signal element; the sequence is FIKRGSH. 175–183 serves as a coordination point for ATP; it reads GPAGNEGKS.

This sequence belongs to the nanoviridea/circoviridae replication-associated protein family. In terms of assembly, homooligomer (Potential). Rep binds to repeated DNA motifs (iterons). It depends on Mg(2+) as a cofactor. Mn(2+) is required as a cofactor.

It localises to the host nucleus. It carries out the reaction ATP + H2O = ADP + phosphate + H(+). Functionally, initiates and terminates the replication only of its own subviral DNA molecule. The closed circular ssDNA genome is first converted to a superhelical dsDNA. Rep binds a specific hairpin at the genome origin of replication. Introduces an endonucleolytic nick within the intergenic region of the genome, thereby initiating the rolling circle replication (RCR). Following cleavage, binds covalently to the 5'-phosphate of DNA as a tyrosyl ester. The cleavage gives rise to a free 3'-OH that serves as a primer for the cellular DNA polymerase. The polymerase synthesizes the (+) strand DNA by rolling circle mechanism. After one round of replication, a Rep-catalyzed nucleotidyl transfer reaction releases a circular single-stranded virus genome, thereby terminating the replication. Displays origin-specific DNA cleavage, nucleotidyl transferase, ATPase and helicase activities. In Subterranean clover stunt C6 alphasatellite (SCSC6A), this protein is Para-Rep C6 (C6).